We begin with the raw amino-acid sequence, 462 residues long: Ribosomal protein uS12 methylthiotransferase RimO (462 aa).

In terms of domain architecture, MTTase N-terminal spans 22-133; it reads ASVAFLHLGC…IIEVLQRVRQ (112 aa). Cys-31, Cys-67, Cys-96, Cys-171, Cys-175, and Cys-178 together coordinate [4Fe-4S] cluster. The region spanning 157–386 is the Radical SAM core domain; that stretch reads TTGRFVSYLK…VAIQQPISAA (230 aa). A TRAM domain is found at 389–460; that stretch reads QALIGQTVDV…LYDLTGEINH (72 aa).

This sequence belongs to the methylthiotransferase family. RimO subfamily. [4Fe-4S] cluster serves as cofactor.

It localises to the cytoplasm. It catalyses the reaction L-aspartate(89)-[ribosomal protein uS12]-hydrogen + (sulfur carrier)-SH + AH2 + 2 S-adenosyl-L-methionine = 3-methylsulfanyl-L-aspartate(89)-[ribosomal protein uS12]-hydrogen + (sulfur carrier)-H + 5'-deoxyadenosine + L-methionine + A + S-adenosyl-L-homocysteine + 2 H(+). Catalyzes the methylthiolation of an aspartic acid residue of ribosomal protein uS12. The polypeptide is Ribosomal protein uS12 methylthiotransferase RimO (Prochlorococcus marinus (strain MIT 9211)).